The primary structure comprises 201 residues: MDKFTTLEGVAAPLKIINVDTDMIIPKQYLKTIKRTGLGKGLFSEQRYNDDGSENPDFILNKPAYRGAKILVAGDNFGCGSSREHAPWALLDFGIRCVISTSFGDIFYNNCFKNGVLPIRVEQADLDRLFDDAERGSNATVTIDLPNQEIRGPDGGTVKFEIDPFRKHCLINGLDDIGLTLEKKASIDSYEAKAKTERAWA.

The protein belongs to the LeuD family. LeuD type 1 subfamily. In terms of assembly, heterodimer of LeuC and LeuD.

The catalysed reaction is (2R,3S)-3-isopropylmalate = (2S)-2-isopropylmalate. The protein operates within amino-acid biosynthesis; L-leucine biosynthesis; L-leucine from 3-methyl-2-oxobutanoate: step 2/4. Its function is as follows. Catalyzes the isomerization between 2-isopropylmalate and 3-isopropylmalate, via the formation of 2-isopropylmaleate. The sequence is that of 3-isopropylmalate dehydratase small subunit from Rhodopseudomonas palustris (strain BisA53).